Here is an 89-residue protein sequence, read N- to C-terminus: MATAVAAKEEPATRFAKDQLKAIIERIERLEEEKKTLSDDIRDVYAEAKGNGYDVKALRTIVRMRKQDANERAEQETILETYMQALGML.

The protein belongs to the UPF0335 family.

The sequence is that of UPF0335 protein Nham_1221 from Nitrobacter hamburgensis (strain DSM 10229 / NCIMB 13809 / X14).